A 564-amino-acid polypeptide reads, in one-letter code: Iron-sensing transcriptional repressor (564 aa).

The GATA-type 1 zinc-finger motif lies at 12–36 (CSNCHKTTTSLWRRGPDNSLLCNAC). Residues 100 to 170 (ASKSQSGRKS…SSPPHEPSVT (71 aa)) form a disordered region. Ser-109 is subject to Phosphoserine. Low complexity predominate over residues 109-120 (SLSPNPSSVPSS). Positions 135–148 (QIVSDTTTETSNGT) are enriched in polar residues. A GATA-type 2 zinc finger spans residues 172 to 196 (CQNCATTNTPLWRRDESGNPICNAC). 3 disordered regions span residues 226–285 (GNAN…NTGV), 381–409 (DSSK…NPLG), and 443–496 (LLNP…VQGS). 4 stretches are compositionally biased toward polar residues: residues 240–253 (SGDS…QSTR), 260–271 (SFPNGNGHASGN), 381–407 (DSSK…QSNP), and 450–486 (PSNS…SPVS).

Interacts with tup11.

The protein resides in the nucleus. With respect to regulation, activated by iron. Its function is as follows. Transcriptional repressor that binds the consensus promoter sequence 5'-[AT]GATAA-3' during iron-replete conditions to down-regulate transcription of target genes. Represses the expression of the iron transporter fio1 in response to high iron concentrations. Also represses the expression of str1, str2 and str3. Represses the expression of shu1 in presence of iron. The polypeptide is Iron-sensing transcriptional repressor (Schizosaccharomyces pombe (strain 972 / ATCC 24843) (Fission yeast)).